The following is a 277-amino-acid chain: Putative phosphoenolpyruvate synthase regulatory protein (277 aa).

ADP is bound at residue 157–164; the sequence is GVSRCGKT.

The protein belongs to the pyruvate, phosphate/water dikinase regulatory protein family. PSRP subfamily.

It carries out the reaction [pyruvate, water dikinase] + ADP = [pyruvate, water dikinase]-phosphate + AMP + H(+). The enzyme catalyses [pyruvate, water dikinase]-phosphate + phosphate + H(+) = [pyruvate, water dikinase] + diphosphate. In terms of biological role, bifunctional serine/threonine kinase and phosphorylase involved in the regulation of the phosphoenolpyruvate synthase (PEPS) by catalyzing its phosphorylation/dephosphorylation. The sequence is that of Putative phosphoenolpyruvate synthase regulatory protein from Citrobacter koseri (strain ATCC BAA-895 / CDC 4225-83 / SGSC4696).